Reading from the N-terminus, the 558-residue chain is CTP synthase (558 aa).

Residues 1–267 (MTKFVFVTGG…AQQTLELLNL (267 aa)) form an amidoligase domain region. Position 13 (S13) interacts with CTP. S13 is a UTP binding site. ATP-binding positions include 14–19 (SIGKGI) and D71. 2 residues coordinate Mg(2+): D71 and E141. CTP contacts are provided by residues 148–150 (DIE), 188–193 (KTKPTQ), and K224. UTP contacts are provided by residues 188-193 (KTKPTQ) and K224. Positions 292 to 534 (EVALVGKYVQ…VKASVDYNHV (243 aa)) constitute a Glutamine amidotransferase type-1 domain. G354 serves as a coordination point for L-glutamine. Residue C381 is the Nucleophile; for glutamine hydrolysis of the active site. L-glutamine-binding positions include 382-385 (MGMQ), E405, and R462. Residues H507 and E509 contribute to the active site.

Belongs to the CTP synthase family. As to quaternary structure, homotetramer.

The catalysed reaction is UTP + L-glutamine + ATP + H2O = CTP + L-glutamate + ADP + phosphate + 2 H(+). The enzyme catalyses L-glutamine + H2O = L-glutamate + NH4(+). It catalyses the reaction UTP + NH4(+) + ATP = CTP + ADP + phosphate + 2 H(+). The protein operates within pyrimidine metabolism; CTP biosynthesis via de novo pathway; CTP from UDP: step 2/2. With respect to regulation, allosterically activated by GTP, when glutamine is the substrate; GTP has no effect on the reaction when ammonia is the substrate. The allosteric effector GTP functions by stabilizing the protein conformation that binds the tetrahedral intermediate(s) formed during glutamine hydrolysis. Inhibited by the product CTP, via allosteric rather than competitive inhibition. Catalyzes the ATP-dependent amination of UTP to CTP with either L-glutamine or ammonia as the source of nitrogen. Regulates intracellular CTP levels through interactions with the four ribonucleotide triphosphates. The sequence is that of CTP synthase from Gloeothece citriformis (strain PCC 7424) (Cyanothece sp. (strain PCC 7424)).